We begin with the raw amino-acid sequence, 382 residues long: Guanine nucleotide exchange factor for Rab-3A (382 aa).

The span at 1–17 (MWSGPPQPDQGLPPPLA) shows a compositional bias: pro residues. Residues 1–60 (MWSGPPQPDQGLPPPLAAVPVPWKSTDPCQGHRESPGALVETSAGEEAQGQEGPAAAQLD) are disordered. Over residues 45–58 (GEEAQGQEGPAAAQ) the composition is skewed to low complexity. Residues 73–161 (EKGSEFLKEE…AEVTALKTLV (89 aa)) adopt a coiled-coil conformation. Positions 166 to 198 (PASPNRELHPQLLSPTKAGPRKGHSRHKSTSST) are disordered. Ser-168 and Ser-179 each carry phosphoserine. The segment covering 184-194 (GPRKGHSRHKS) has biased composition (basic residues).

The protein belongs to the SEC2 family. In terms of assembly, interacts with RAB3A and IHPK1 through the coiled-coil domain. This interaction is competitive. IHPK1 kinase activity is not required for this interaction.

Functionally, guanine nucleotide exchange factor (GEF) which may activate RAB3A, a GTPase that regulates synaptic vesicle exocytosis. Promotes the exchange of GDP to GTP, converting inactive GDP-bound Rab proteins into their active GTP-bound form. May also activate RAB8A and RAB8B. This is Guanine nucleotide exchange factor for Rab-3A (RAB3IL1) from Homo sapiens (Human).